Here is a 440-residue protein sequence, read N- to C-terminus: SET domain-containing protein 4 (440 aa).

Over residues 1–16 the composition is skewed to basic residues; sequence MQKGKGRTSRIRRRKL. Residues 1–24 are disordered; it reads MQKGKGRTSRIRRRKLCGSSESRG. In terms of domain architecture, SET spans 48–273; that stretch reads SNLAPACFPG…KHEEVFICYG (226 aa). Tyr272 is a binding site for S-adenosyl-L-methionine.

It belongs to the class V-like SAM-binding methyltransferase superfamily. SETD4 family. As to quaternary structure, forms a ternary complex with TBK1 and ZNF268; the interaction with TBK1 is ZNF268-dependent and leads to TBK1 monomethylation.

The protein localises to the cytoplasm. It localises to the cytosol. The protein resides in the nucleus. It carries out the reaction L-lysyl(4)-[histone H3] + S-adenosyl-L-methionine = N(6)-methyl-L-lysyl(4)-[histone H3] + S-adenosyl-L-homocysteine + H(+). It catalyses the reaction N(6)-methyl-L-lysyl(4)-[histone H3] + S-adenosyl-L-methionine = N(6),N(6)-dimethyl-L-lysyl(4)-[histone H3] + S-adenosyl-L-homocysteine + H(+). The catalysed reaction is L-lysyl(20)-[histone H4] + S-adenosyl-L-methionine = N(6)-methyl-L-lysyl(20)-[histone H4] + S-adenosyl-L-homocysteine + H(+). The enzyme catalyses N(6)-methyl-L-lysyl(20)-[histone H4] + S-adenosyl-L-methionine = N(6),N(6)-dimethyl-L-lysyl(20)-[histone H4] + S-adenosyl-L-homocysteine + H(+). It carries out the reaction N(6),N(6)-dimethyl-L-lysyl(20)-[histone H4] + S-adenosyl-L-methionine = N(6),N(6),N(6)-trimethyl-L-lysyl(20)-[histone H4] + S-adenosyl-L-homocysteine + H(+). It catalyses the reaction L-lysyl-[protein] + S-adenosyl-L-methionine = N(6)-methyl-L-lysyl-[protein] + S-adenosyl-L-homocysteine + H(+). Its function is as follows. Protein-lysine N-methyltransferase that methylates both histones and non-histone proteins. Via its catalytic activity, regulates many processes, including cell proliferation, cell differentiation, inflammatory response and apoptosis. Regulates the inflammatory response by mediating mono- and dimethylation of 'Lys-4' of histone H3 (H3K4me1 and H3K4me2, respectively), leading to activate the transcription of pro-inflammatory cytokines IL6 and TNF-alpha. Through the catalysis of TBK1 monomethylation, may regulate virus-induced interferon signaling. TBK1 monomethylation enhances its interaction with MAVS, STING and IRF3, hence promoting antiviral interferon signaling. Also involved in the regulation of stem cell quiescence by catalyzing the trimethylation of 'Lys-20' of histone H4 (H4K20me3), thereby promoting heterochromatin formation. In the brain, epigenetically controls quiescence of neural stem cells for sustaining a protected neural stem cell population and maintaining a stem cell reservoir for neurogenesis. Involved in proliferation, migration, paracrine and myogenic differentiation of bone marrow mesenchymal stem cells (BMSCs). Through the catalysis of XRCC5/Ku70 trimethylation, regulates BAX-mediated apoptosis. SETD4-catalyzed XRCC5 methylation results in XRCC5 translocation to the cytoplasm, where it interacts with BAX, sequestering it from the mitochondria, hence preventing BAX-mediated apoptosis. This chain is SET domain-containing protein 4, found in Homo sapiens (Human).